Reading from the N-terminus, the 365-residue chain is 2-aminoethylphosphonate--pyruvate transaminase (365 aa).

At K194 the chain carries N6-(pyridoxal phosphate)lysine.

This sequence belongs to the class-V pyridoxal-phosphate-dependent aminotransferase family. PhnW subfamily. In terms of assembly, homodimer. Pyridoxal 5'-phosphate is required as a cofactor.

It catalyses the reaction (2-aminoethyl)phosphonate + pyruvate = phosphonoacetaldehyde + L-alanine. Its function is as follows. Involved in phosphonate degradation. In Bacillus cereus (strain ATCC 14579 / DSM 31 / CCUG 7414 / JCM 2152 / NBRC 15305 / NCIMB 9373 / NCTC 2599 / NRRL B-3711), this protein is 2-aminoethylphosphonate--pyruvate transaminase.